A 90-amino-acid polypeptide reads, in one-letter code: Small ribosomal subunit protein uS15 (90 aa).

This sequence belongs to the universal ribosomal protein uS15 family. Part of the 30S ribosomal subunit. Forms a bridge to the 50S subunit in the 70S ribosome, contacting the 23S rRNA.

One of the primary rRNA binding proteins, it binds directly to 16S rRNA where it helps nucleate assembly of the platform of the 30S subunit by binding and bridging several RNA helices of the 16S rRNA. Its function is as follows. Forms an intersubunit bridge (bridge B4) with the 23S rRNA of the 50S subunit in the ribosome. The protein is Small ribosomal subunit protein uS15 of Helicobacter pylori (strain P12).